A 161-amino-acid polypeptide reads, in one-letter code: Large ribosomal subunit protein uL30m (161 aa).

A mitochondrion-targeting transit peptide spans 1–34 (MAGILRLVVQRPPGGLQTVTKGVESLIGTDWIRH).

It belongs to the universal ribosomal protein uL30 family. As to quaternary structure, component of the mitochondrial ribosome large subunit (39S) which comprises a 16S rRNA and about 50 distinct proteins.

Its subcellular location is the mitochondrion. This Macaca fascicularis (Crab-eating macaque) protein is Large ribosomal subunit protein uL30m (MRPL30).